The primary structure comprises 87 residues: Tachykinin-1 (87 aa).

The N-terminal stretch at 1-22 is a signal peptide; sequence MIRVGLILCCIFIAGVFEASSA. Positions 23-37 are excised as a propeptide; it reads DDMLTAHNLIKRSEV. The residue at position 49 (Met49) is a Methionine amide. Residues 52–87 constitute a propeptide that is removed on maturation; that stretch reads SEELTRRLIQHPGSMSETSKRGPPKKVSRRPYILKK. Residues 61 to 87 are disordered; it reads QHPGSMSETSKRGPPKKVSRRPYILKK. Residues 73–87 show a composition bias toward basic residues; sequence GPPKKVSRRPYILKK.

It belongs to the tachykinin family. In terms of tissue distribution, expressed in the posterior salivary gland and more specifically in the mucus-secreting gland cells.

The protein resides in the secreted. In terms of biological role, tachykinins are active peptides which excite neurons, evoke behavioral responses, are potent vasodilators and secretagogues, and contract (directly or indirectly) many smooth muscles. This is Tachykinin-1 from Octopus vulgaris (Common octopus).